We begin with the raw amino-acid sequence, 459 residues long: MLKIYNSITRQKQEFKPITPGKIGMYVCGVTIYDLCHIGHGRTFVSFDMIVRYLRYAGYEVNFQRNITDVDDKIIKRANENNESCEALTERLIGEMHQDFDALNMLRPDFEPRATLHIAEIIDMVELLLARGHAYVASDGDVLFSVASYPDYGRLSGQNLDQLQAGARVEVDETKQNPMDFVLWKMSKPGEPTWESPWGPGRPGWHIECSAMNSKHLGLHFDIHGGGSDLQFPHHENEIAQSCCAHDTPYVNYWMHTGMVMVDREKMSKSLGNFFTIRDVLGHYDAETVRYFLLSGHYRSQLNYSEDNLKQARSALERLYTAIKDVDLTVAAAPAEEFVAKFKAAMDDDFNTPEAYSVLFDMVREINRLKLTDMAQASALAVTLKQLADVLGLLSQEPEAFFQGGGSYDEVAEIEALIVERNRARTEKDWAAADVARNCLNELGVELEDGPSGTTWRKK.

Residue Cys28 coordinates Zn(2+). The 'HIGH' region motif lies at 30–40 (VTIYDLCHIGH). 3 residues coordinate Zn(2+): Cys209, His234, and Glu238. Positions 266–270 (KMSKS) match the 'KMSKS' region motif. Lys269 provides a ligand contact to ATP.

It belongs to the class-I aminoacyl-tRNA synthetase family. In terms of assembly, monomer. It depends on Zn(2+) as a cofactor.

It localises to the cytoplasm. The enzyme catalyses tRNA(Cys) + L-cysteine + ATP = L-cysteinyl-tRNA(Cys) + AMP + diphosphate. This Shewanella baltica (strain OS155 / ATCC BAA-1091) protein is Cysteine--tRNA ligase.